A 388-amino-acid chain; its full sequence is Probable peptidoglycan glycosyltransferase FtsW (388 aa).

Transmembrane regions (helical) follow at residues 16 to 36 (LVLIVLALITIGLVMVLSSSV), 54 to 74 (VFALGVGGLFAALVLMVPSQS), 82 to 102 (WFLLGLVLLALVLIFGREIGG), 109 to 129 (LVVMNFQPAEWMKIATILFLA), 144 to 164 (TAVIRLFLPFGIMAGLLLLQP), 167 to 187 (GTTVLIAGVLVGMLFIAGAPF), 189 to 209 (YFVITVLPIGAILAVLLINSP), 233 to 253 (SQALMAIGSGGITGSGLGASV), 277 to 297 (WLGVVILLSLYGLLLWRMFAV), 310 to 330 (ALVVYGVAIMFAGQLLINVGV), and 342 to 362 (LPFVSYGGSSLMMALLAIGLV).

The protein belongs to the SEDS family. FtsW subfamily.

It localises to the cell inner membrane. The catalysed reaction is [GlcNAc-(1-&gt;4)-Mur2Ac(oyl-L-Ala-gamma-D-Glu-L-Lys-D-Ala-D-Ala)](n)-di-trans,octa-cis-undecaprenyl diphosphate + beta-D-GlcNAc-(1-&gt;4)-Mur2Ac(oyl-L-Ala-gamma-D-Glu-L-Lys-D-Ala-D-Ala)-di-trans,octa-cis-undecaprenyl diphosphate = [GlcNAc-(1-&gt;4)-Mur2Ac(oyl-L-Ala-gamma-D-Glu-L-Lys-D-Ala-D-Ala)](n+1)-di-trans,octa-cis-undecaprenyl diphosphate + di-trans,octa-cis-undecaprenyl diphosphate + H(+). It functions in the pathway cell wall biogenesis; peptidoglycan biosynthesis. Its function is as follows. Peptidoglycan polymerase that is essential for cell division. This Thiomicrospira cyclica (strain DSM 14477 / JCM 11371 / ALM1) (Thioalkalimicrobium cyclicum) protein is Probable peptidoglycan glycosyltransferase FtsW.